Consider the following 212-residue polypeptide: Prolactin (212 aa).

A signal peptide spans 1 to 24 (MAHRETNGSKLFITVLCMVAACSA). 2 cysteine pairs are disulfide-bonded: Cys-70–Cys-185 and Cys-202–Cys-212.

The protein belongs to the somatotropin/prolactin family.

It localises to the secreted. The protein is Prolactin (prl) of Sparus aurata (Gilthead sea bream).